We begin with the raw amino-acid sequence, 261 residues long: Thiazole synthase (261 aa).

Lysine 95 serves as the catalytic Schiff-base intermediate with DXP. Residues glycine 156, 182-183 (AG), and 204-205 (NT) each bind 1-deoxy-D-xylulose 5-phosphate.

The protein belongs to the ThiG family. Homotetramer. Forms heterodimers with either ThiH or ThiS.

The protein localises to the cytoplasm. The catalysed reaction is [ThiS sulfur-carrier protein]-C-terminal-Gly-aminoethanethioate + 2-iminoacetate + 1-deoxy-D-xylulose 5-phosphate = [ThiS sulfur-carrier protein]-C-terminal Gly-Gly + 2-[(2R,5Z)-2-carboxy-4-methylthiazol-5(2H)-ylidene]ethyl phosphate + 2 H2O + H(+). It participates in cofactor biosynthesis; thiamine diphosphate biosynthesis. Functionally, catalyzes the rearrangement of 1-deoxy-D-xylulose 5-phosphate (DXP) to produce the thiazole phosphate moiety of thiamine. Sulfur is provided by the thiocarboxylate moiety of the carrier protein ThiS. In vitro, sulfur can be provided by H(2)S. The polypeptide is Thiazole synthase (Pectobacterium carotovorum subsp. carotovorum (strain PC1)).